Reading from the N-terminus, the 69-residue chain is Cold shock-like protein CspC (69 aa).

Residues 6 to 66 (GQVKWFNESK…GQKGPAAVNV (61 aa)) form the CSD domain.

It localises to the cytoplasm. This chain is Cold shock-like protein CspC (cspC), found in Buchnera aphidicola subsp. Acyrthosiphon pisum (strain APS) (Acyrthosiphon pisum symbiotic bacterium).